Consider the following 689-residue polypeptide: Glycine--tRNA ligase beta subunit (689 aa).

This sequence belongs to the class-II aminoacyl-tRNA synthetase family. In terms of assembly, tetramer of two alpha and two beta subunits.

It is found in the cytoplasm. It carries out the reaction tRNA(Gly) + glycine + ATP = glycyl-tRNA(Gly) + AMP + diphosphate. This Serratia proteamaculans (strain 568) protein is Glycine--tRNA ligase beta subunit.